The primary structure comprises 159 residues: UPF0262 protein TM1040_3562 (159 aa).

Residues 1–21 (MSRISQIELDDRNLPPPTPEI) are disordered.

Belongs to the UPF0262 family.

The protein is UPF0262 protein TM1040_3562 of Ruegeria sp. (strain TM1040) (Silicibacter sp.).